The chain runs to 340 residues: Anthranilate phosphoribosyltransferase (340 aa).

Residues Gly-78, Gly-81–Asp-82, Thr-86, Asn-88–Thr-91, Lys-106–Ser-114, and Ser-118 contribute to the 5-phospho-alpha-D-ribose 1-diphosphate site. Gly-78 is a binding site for anthranilate. Ser-90 lines the Mg(2+) pocket. Asn-109 contacts anthranilate. Position 164 (Arg-164) interacts with anthranilate. Residues Asp-223 and Glu-224 each coordinate Mg(2+).

It belongs to the anthranilate phosphoribosyltransferase family. As to quaternary structure, homodimer. Mg(2+) serves as cofactor.

It catalyses the reaction N-(5-phospho-beta-D-ribosyl)anthranilate + diphosphate = 5-phospho-alpha-D-ribose 1-diphosphate + anthranilate. Its pathway is amino-acid biosynthesis; L-tryptophan biosynthesis; L-tryptophan from chorismate: step 2/5. In terms of biological role, catalyzes the transfer of the phosphoribosyl group of 5-phosphorylribose-1-pyrophosphate (PRPP) to anthranilate to yield N-(5'-phosphoribosyl)-anthranilate (PRA). The sequence is that of Anthranilate phosphoribosyltransferase from Bacillus pumilus (strain SAFR-032).